The chain runs to 292 residues: ATP synthase gamma chain (292 aa).

The protein belongs to the ATPase gamma chain family. As to quaternary structure, F-type ATPases have 2 components, CF(1) - the catalytic core - and CF(0) - the membrane proton channel. CF(1) has five subunits: alpha(3), beta(3), gamma(1), delta(1), epsilon(1). CF(0) has three main subunits: a, b and c.

Its subcellular location is the cell inner membrane. Functionally, produces ATP from ADP in the presence of a proton gradient across the membrane. The gamma chain is believed to be important in regulating ATPase activity and the flow of protons through the CF(0) complex. This Brucella canis (strain ATCC 23365 / NCTC 10854 / RM-666) protein is ATP synthase gamma chain.